The primary structure comprises 558 residues: Dimethylaniline monooxygenase [N-oxide-forming] 4 (558 aa).

Residues 9-13, Glu32, and 40-41 each bind FAD; these read GAGVS and LW. NADP(+) is bound by residues 60–61 and 195–198; these read TN and TGGD. The chain crosses the membrane as a helical span at residues 517–537; the sequence is AWGAPVLLASLLLICKSSLFL.

The protein belongs to the FMO family. FAD serves as cofactor. As to expression, liver.

The protein resides in the microsome membrane. It is found in the endoplasmic reticulum membrane. It carries out the reaction N,N-dimethylaniline + NADPH + O2 + H(+) = N,N-dimethylaniline N-oxide + NADP(+) + H2O. This protein is involved in the oxidative metabolism of a variety of xenobiotics such as drugs and pesticides. In Homo sapiens (Human), this protein is Dimethylaniline monooxygenase [N-oxide-forming] 4 (FMO4).